Consider the following 1137-residue polypeptide: DNA mismatch repair protein Msh3 (1137 aa).

2 stretches are compositionally biased toward low complexity: residues 31-42 (TGSLKSTSSSTG) and 51-62 (AAAAAAAAAAAA). 2 disordered regions span residues 31–122 (TGSL…SEPK) and 201–222 (SQFG…KSAN). S33 is modified (phosphoserine). Over residues 63 to 76 (PPAPPAPAFPPQLP) the composition is skewed to pro residues. The tract at residues 75–297 (LPPHIATEID…HRLFVHVRRL (223 aa)) is interaction with EXO1. The span at 81-97 (TEIDRRKKRPLENDGPV) shows a compositional bias: basic and acidic residues. Polar residues predominate over residues 201 to 220 (SQFGSSNTSHENLQKTASKS). ATP is bound at residue 896–903 (GPNMGGKS). At T1099 the chain carries Phosphothreonine.

The protein belongs to the DNA mismatch repair MutS family. MSH3 subfamily. Component of the DNA mismatch repair (MMR) complex composed at least of MSH2, MSH3, MSH6, PMS1 and MLH1. Heterodimer consisting of MSH2-MSH3 (MutS beta). Forms a ternary complex with MutL alpha (MLH1-PMS1). Interacts with EXO1. Interacts with MCM9.

In terms of biological role, component of the post-replicative DNA mismatch repair system (MMR). Heterodimerizes with MSH2 to form MutS beta which binds to DNA mismatches thereby initiating DNA repair. When bound, the MutS beta heterodimer bends the DNA helix and shields approximately 20 base pairs. MutS beta recognizes large insertion-deletion loops (IDL) up to 13 nucleotides long. After mismatch binding, forms a ternary complex with the MutL alpha heterodimer, which is thought to be responsible for directing the downstream MMR events, including strand discrimination, excision, and resynthesis. This chain is DNA mismatch repair protein Msh3 (MSH3), found in Homo sapiens (Human).